Reading from the N-terminus, the 187-residue chain is Transmembrane protein 11-B, mitochondrial (187 aa).

A run of 2 helical transmembrane segments spans residues 79-95 and 102-119; these read TAVL…LALP and VSLP…LYGI.

The protein belongs to the TMEM11 family.

It localises to the mitochondrion inner membrane. Its function is as follows. Plays a role in mitochondrial morphogenesis. In Xenopus laevis (African clawed frog), this protein is Transmembrane protein 11-B, mitochondrial (tmem11-b).